We begin with the raw amino-acid sequence, 62 residues long: Flavodoxin (62 aa).

The Flavodoxin-like domain occupies 4-62 (IGIFFGTDTGKTRKIAKMIHKQLGELADAPVNINRTTLDDFMAYPVLLLGTPTLGDGQL).

The protein belongs to the flavodoxin family. FMN serves as cofactor.

Its function is as follows. Low-potential electron donor to a number of redox enzymes. NifF is the electron donor to nitrogenase. The polypeptide is Flavodoxin (nifF) (Klebsiella oxytoca).